We begin with the raw amino-acid sequence, 638 residues long: Neuroendocrine convertase 2 (638 aa).

An N-terminal signal peptide occupies residues 1–25; it reads MKGGCVSQWKAAAGFLFCVMVFASA. A propeptide spanning residues 26 to 109 is cleaved from the precursor; the sequence is ERPVFTNHFL…QQEGFDRKKR (84 aa). One can recognise a Peptidase S8 domain in the interval 129-453; it reads QWYLINTGQA…YGVLDAGAMV (325 aa). Residues aspartate 167 and histidine 208 each act as charge relay system in the active site. 2 cysteine pairs are disulfide-bonded: cysteine 225–cysteine 376 and cysteine 317–cysteine 347. Residue asparagine 375 is glycosylated (N-linked (GlcNAc...) asparagine). The active-site Charge relay system is serine 384. The P/Homo B domain occupies 461-597; that stretch reads TVPERFHCVG…TLMLHGTQSA (137 aa). Cysteine 468 and cysteine 494 form a disulfide bridge. N-linked (GlcNAc...) asparagine glycans are attached at residues asparagine 514 and asparagine 524.

This sequence belongs to the peptidase S8 family. Furin subfamily.

It localises to the cytoplasmic vesicle. The protein localises to the secretory vesicle. It is found in the secreted. It catalyses the reaction Release of protein hormones and neuropeptides from their precursors, generally by hydrolysis of -Lys-Arg-|- bonds.. Functionally, serine endopeptidase which is involved in the processing of hormone and other protein precursors at sites comprised of pairs of basic amino acid residues. Responsible for the release of glucagon from proglucagon in pancreatic A cells. In Pongo abelii (Sumatran orangutan), this protein is Neuroendocrine convertase 2 (PCSK2).